The sequence spans 204 residues: Intraflagellar transport protein 27 (204 aa).

Residues 23 to 30 (GEATVGKS), 75 to 79 (DTAGS), and 136 to 139 (NKTD) each bind GTP.

It belongs to the small GTPase superfamily. Rab family. As to quaternary structure, component of the IFT complex B, the core composed of IFT25, IFT27, IFT46, IFT52, IFT74, IFT81 and IFT88 as well as associated subunits IFT20, IFT57, IFT80 and IFT172. Interacts with IFT25; the interaction is direct.

The protein localises to the cell projection. It localises to the cilium. The protein resides in the flagellum. It is found in the cytoplasm. Its subcellular location is the cytoskeleton. The protein localises to the flagellum basal body. In terms of biological role, small GTPase-like component of the intraflagellar transport (IFT) complex B. Forms a subcomplex within the IFT complex B with IFT25. Has very low GTPase activity either because it lacks the conserved catalytic Gln in position 79 or because it requires some GTPase-activating protein (GAP) for GTP turnover. This is Intraflagellar transport protein 27 (IFT27) from Chlamydomonas reinhardtii (Chlamydomonas smithii).